Here is a 903-residue protein sequence, read N- to C-terminus: Dual 3',5'-cyclic-AMP and -GMP phosphodiesterase 11A (903 aa).

GAF domains are found at residues 175–324 (DLTS…GIAI) and 356–512 (DLEK…GLGI). A 3',5'-cyclic GMP-binding site is contributed by Ser-378. The region spanning 542–866 (SKTEVDKFKA…VKWEELDKKR (325 aa)) is the PDEase domain. Residue His-618 is the Proton donor of the active site. Residues His-622, His-658, Asp-659, and Asp-770 each coordinate a divalent metal cation. The tract at residues 863 to 903 (DKKRQHDHGASVPASPCSAAEGSETGGVPCCSNNTPPTHVS) is disordered. The span at 893–903 (CSNNTPPTHVS) shows a compositional bias: polar residues.

This sequence belongs to the cyclic nucleotide phosphodiesterase family. A divalent metal cation is required as a cofactor.

The protein resides in the cytoplasm. Its subcellular location is the cytosol. It carries out the reaction 3',5'-cyclic GMP + H2O = GMP + H(+). It catalyses the reaction 3',5'-cyclic AMP + H2O = AMP + H(+). In terms of biological role, plays a role in signal transduction by regulating the intracellular concentration of cyclic nucleotides cAMP and cGMP. Catalyzes the hydrolysis of both cAMP and cGMP to 5'-AMP and 5'-GMP, respectively. This Takifugu rubripes (Japanese pufferfish) protein is Dual 3',5'-cyclic-AMP and -GMP phosphodiesterase 11A (pde11a).